Reading from the N-terminus, the 283-residue chain is Ribose-phosphate pyrophosphokinase (283 aa).

ATP is bound by residues 34–36 (DGE) and 89–90 (RQ). Mg(2+) is bound by residues His120 and Asp159. Residue Lys182 is part of the active site. Arg184 and Asp208 together coordinate D-ribose 5-phosphate.

The protein belongs to the ribose-phosphate pyrophosphokinase family. Class III (archaeal) subfamily. It depends on Mg(2+) as a cofactor.

It is found in the cytoplasm. It carries out the reaction D-ribose 5-phosphate + ATP = 5-phospho-alpha-D-ribose 1-diphosphate + AMP + H(+). Its pathway is metabolic intermediate biosynthesis; 5-phospho-alpha-D-ribose 1-diphosphate biosynthesis; 5-phospho-alpha-D-ribose 1-diphosphate from D-ribose 5-phosphate (route I): step 1/1. In terms of biological role, involved in the biosynthesis of the central metabolite phospho-alpha-D-ribosyl-1-pyrophosphate (PRPP) via the transfer of pyrophosphoryl group from ATP to 1-hydroxyl of ribose-5-phosphate (Rib-5-P). This is Ribose-phosphate pyrophosphokinase from Methanosarcina acetivorans (strain ATCC 35395 / DSM 2834 / JCM 12185 / C2A).